The primary structure comprises 101 residues: Urease subunit beta (101 aa).

This sequence belongs to the urease beta subunit family. Heterotrimer of UreA (gamma), UreB (beta) and UreC (alpha) subunits. Three heterotrimers associate to form the active enzyme.

It localises to the cytoplasm. It catalyses the reaction urea + 2 H2O + H(+) = hydrogencarbonate + 2 NH4(+). Its pathway is nitrogen metabolism; urea degradation; CO(2) and NH(3) from urea (urease route): step 1/1. This chain is Urease subunit beta, found in Mesorhizobium japonicum (strain LMG 29417 / CECT 9101 / MAFF 303099) (Mesorhizobium loti (strain MAFF 303099)).